The chain runs to 616 residues: Chaperone protein HscA (616 aa).

It belongs to the heat shock protein 70 family.

In terms of biological role, chaperone involved in the maturation of iron-sulfur cluster-containing proteins. Has a low intrinsic ATPase activity which is markedly stimulated by HscB. Involved in the maturation of IscU. The chain is Chaperone protein HscA from Klebsiella pneumoniae (strain 342).